The primary structure comprises 445 residues: Sodium/proton-dependent alanine carrier protein (445 aa).

The next 9 membrane-spanning stretches (helical) occupy residues 41–61 (IAYGGPGAVFWMWVITFIGAA), 103–123 (AAIILSMAVLMPGIQANSIAD), 129–149 (FGIPKLVTGIFVIAVLGFTIF), 159–179 (AEIVVPFMAVGYLFVAIAIIA), 188–208 (VFGLIFKSAFGADQVFGGILG), 249–269 (AFSIYLDVFLVVTATALMILF), 304–324 (TLFPGFGSAFIAIALFFFAFT), 349–369 (AFFALKLVFLAATFYGTVKTA), and 375–395 (MGDIGLGIMVWLNLIAILLLF).

The protein belongs to the alanine or glycine:cation symporter (AGCS) (TC 2.A.25) family. The N-terminus is blocked.

Its subcellular location is the cell membrane. Its function is as follows. Mediates the active transport of alanine, driven by either an H(+) or Na(+) gradient. This is Sodium/proton-dependent alanine carrier protein from Bacillus sp. (strain PS3).